Here is a 255-residue protein sequence, read N- to C-terminus: Triosephosphate isomerase (255 aa).

Residue 9–11 coordinates substrate; the sequence is NWK. His-95 functions as the Electrophile in the catalytic mechanism. The active-site Proton acceptor is Glu-167. Substrate-binding positions include Gly-173, Ser-212, and 233 to 234; that span reads GG.

The protein belongs to the triosephosphate isomerase family. As to quaternary structure, homodimer.

The protein localises to the cytoplasm. The catalysed reaction is D-glyceraldehyde 3-phosphate = dihydroxyacetone phosphate. It functions in the pathway carbohydrate biosynthesis; gluconeogenesis. It participates in carbohydrate degradation; glycolysis; D-glyceraldehyde 3-phosphate from glycerone phosphate: step 1/1. Functionally, involved in the gluconeogenesis. Catalyzes stereospecifically the conversion of dihydroxyacetone phosphate (DHAP) to D-glyceraldehyde-3-phosphate (G3P). In Salmonella dublin (strain CT_02021853), this protein is Triosephosphate isomerase.